A 418-amino-acid chain; its full sequence is Serine hydroxymethyltransferase (418 aa).

Residues Leu-121 and 125 to 127 contribute to the (6S)-5,6,7,8-tetrahydrofolate site; that span reads GHL. Lys-230 is modified (N6-(pyridoxal phosphate)lysine). 356-358 provides a ligand contact to (6S)-5,6,7,8-tetrahydrofolate; sequence SPF.

Belongs to the SHMT family. Homodimer. The cofactor is pyridoxal 5'-phosphate.

It is found in the cytoplasm. The catalysed reaction is (6R)-5,10-methylene-5,6,7,8-tetrahydrofolate + glycine + H2O = (6S)-5,6,7,8-tetrahydrofolate + L-serine. It participates in one-carbon metabolism; tetrahydrofolate interconversion. Its pathway is amino-acid biosynthesis; glycine biosynthesis; glycine from L-serine: step 1/1. In terms of biological role, catalyzes the reversible interconversion of serine and glycine with tetrahydrofolate (THF) serving as the one-carbon carrier. This reaction serves as the major source of one-carbon groups required for the biosynthesis of purines, thymidylate, methionine, and other important biomolecules. Also exhibits THF-independent aldolase activity toward beta-hydroxyamino acids, producing glycine and aldehydes, via a retro-aldol mechanism. This is Serine hydroxymethyltransferase from Shewanella pealeana (strain ATCC 700345 / ANG-SQ1).